Consider the following 235-residue polypeptide: 2-C-methyl-D-erythritol 4-phosphate cytidylyltransferase (235 aa).

Belongs to the IspD/TarI cytidylyltransferase family. IspD subfamily.

It catalyses the reaction 2-C-methyl-D-erythritol 4-phosphate + CTP + H(+) = 4-CDP-2-C-methyl-D-erythritol + diphosphate. It participates in isoprenoid biosynthesis; isopentenyl diphosphate biosynthesis via DXP pathway; isopentenyl diphosphate from 1-deoxy-D-xylulose 5-phosphate: step 2/6. Its function is as follows. Catalyzes the formation of 4-diphosphocytidyl-2-C-methyl-D-erythritol from CTP and 2-C-methyl-D-erythritol 4-phosphate (MEP). This is 2-C-methyl-D-erythritol 4-phosphate cytidylyltransferase from Pseudomonas fluorescens (strain ATCC BAA-477 / NRRL B-23932 / Pf-5).